The following is a 441-amino-acid chain: 5-hydroxytryptamine receptor 3B (441 aa).

The first 21 residues, 1–21 (MLSSVMAPLWACILVAAGILA), serve as a signal peptide directing secretion. Residues 22-238 (TDTHHPQDSA…IQFNVVMRRH (217 aa)) are Extracellular-facing. N-linked (GlcNAc...) asparagine glycans are attached at residues Asn-52, Asn-96, Asn-138, Asn-168, and Asn-203. Cysteines 155 and 169 form a disulfide. A helical membrane pass occupies residues 239–259 (PLVYVVSLLIPSIFLMLVDLG). Residues 260–268 (SFYLPPNCR) are Cytoplasmic-facing. Residues 269-286 (ARIVFKTSVLVGYTVFRV) traverse the membrane as a helical segment. The N-linked (GlcNAc...) asparagine glycan is linked to Asn-287. Residues 287-303 (NMSNQVPRSVGSTPLIG) are Extracellular-facing. The chain crosses the membrane as a helical span at residues 304-324 (HFFTICMAFLVLSLAKSIVLV). Residues 325–414 (KFLHDEQRGG…WLVLLSRFDR (90 aa)) lie on the Cytoplasmic side of the membrane. Positions 381-413 (VWSQLQSISNYLQTQDQTDQQEAEWLVLLSRFD) are HA-stretch; determines single-channel conductance in 5-HT3 receptors. The helical transmembrane segment at 415 to 435 (LLFQSYLFMLGIYTITLCSLW) threads the bilayer. The Extracellular segment spans residues 436–441 (ALWGGV).

This sequence belongs to the ligand-gated ion channel (TC 1.A.9) family. 5-hydroxytryptamine receptor (TC 1.A.9.2) subfamily. HTR3B sub-subfamily. Forms homopentameric as well as heteropentameric serotonin-activated cation-selective channel complexes with HTR3A. The homomeric complex is not functional. Heteropentameric complexes display properties which resemble that of neuronal serotonin-activated channels in vivo. In terms of processing, N-glycosylation required for membrane localization. As to expression, expressed in the brain cortex, in the caudate nucleus, the hippocampus, the thalamus and the amygdala. Detected in the kidney and testis as well as in monocytes of the spleen, small and large intestine, uterus, prostate, ovary and placenta.

The protein resides in the postsynaptic cell membrane. It is found in the cell membrane. It carries out the reaction Na(+)(in) = Na(+)(out). It catalyses the reaction K(+)(in) = K(+)(out). The enzyme catalyses Ca(2+)(in) = Ca(2+)(out). Forms serotonin (5-hydroxytryptamine/5-HT3)-activated cation-selective channel complexes, which when activated cause fast, depolarizing responses in neurons. In Homo sapiens (Human), this protein is 5-hydroxytryptamine receptor 3B.